The chain runs to 85 residues: uncharacterized protein (85 aa).

Residues 35–85 (SDKDAPFSTQALTRSKSKRKRSALPVANGLKKPTRSIKRPSRGERLSATTI) are disordered.

This is an uncharacterized protein from Pasteurella multocida (strain Pm70).